Consider the following 113-residue polypeptide: Large ribosomal subunit protein bL19 (113 aa).

It belongs to the bacterial ribosomal protein bL19 family.

In terms of biological role, this protein is located at the 30S-50S ribosomal subunit interface and may play a role in the structure and function of the aminoacyl-tRNA binding site. In Corynebacterium efficiens (strain DSM 44549 / YS-314 / AJ 12310 / JCM 11189 / NBRC 100395), this protein is Large ribosomal subunit protein bL19.